A 256-amino-acid chain; its full sequence is Pimeloyl-[acyl-carrier protein] methyl ester esterase (256 aa).

In terms of domain architecture, AB hydrolase-1 spans 15–242; it reads HLVLLHGWGL…AAHAPFISHP (228 aa). Substrate-binding positions include Trp-22, 82 to 83, and 143 to 147; these read SL and FLALQ. The active-site Nucleophile is Ser-82. Catalysis depends on residues Asp-207 and His-235. His-235 serves as a coordination point for substrate.

The protein belongs to the AB hydrolase superfamily. Carboxylesterase BioH family. As to quaternary structure, monomer.

It localises to the cytoplasm. The catalysed reaction is 6-carboxyhexanoyl-[ACP] methyl ester + H2O = 6-carboxyhexanoyl-[ACP] + methanol + H(+). It participates in cofactor biosynthesis; biotin biosynthesis. Its function is as follows. The physiological role of BioH is to remove the methyl group introduced by BioC when the pimeloyl moiety is complete. It allows to synthesize pimeloyl-ACP via the fatty acid synthetic pathway through the hydrolysis of the ester bonds of pimeloyl-ACP esters. This chain is Pimeloyl-[acyl-carrier protein] methyl ester esterase, found in Escherichia coli O7:K1 (strain IAI39 / ExPEC).